The following is a 193-amino-acid chain: MIAHIQGKLVEKSPTEVVIDCNGVGYHVNISLHTYGLLPTTDFVKLFTHLIIKEDSHSLYGFAEKSEKEIFKLLISVSGIGANIARTMLSSIEPKQIINAIGSGDVGTIQSIKGIGVKTAQRTIIDLKEKVLKLYDLDQVSISQSNTNKDEALSALEVLGFIRKSAEKVVEKIVATMPDATVETIIKQALKNL.

A domain I region spans residues 1-63 (MIAHIQGKLV…EDSHSLYGFA (63 aa)). The domain II stretch occupies residues 64-142 (EKSEKEIFKL…KLYDLDQVSI (79 aa)). Residues 143–145 (SQS) are flexible linker. Residues 145–193 (SNTNKDEALSALEVLGFIRKSAEKVVEKIVATMPDATVETIIKQALKNL) are domain III.

It belongs to the RuvA family. In terms of assembly, homotetramer. Forms an RuvA(8)-RuvB(12)-Holliday junction (HJ) complex. HJ DNA is sandwiched between 2 RuvA tetramers; dsDNA enters through RuvA and exits via RuvB. An RuvB hexamer assembles on each DNA strand where it exits the tetramer. Each RuvB hexamer is contacted by two RuvA subunits (via domain III) on 2 adjacent RuvB subunits; this complex drives branch migration. In the full resolvosome a probable DNA-RuvA(4)-RuvB(12)-RuvC(2) complex forms which resolves the HJ.

The protein resides in the cytoplasm. The RuvA-RuvB-RuvC complex processes Holliday junction (HJ) DNA during genetic recombination and DNA repair, while the RuvA-RuvB complex plays an important role in the rescue of blocked DNA replication forks via replication fork reversal (RFR). RuvA specifically binds to HJ cruciform DNA, conferring on it an open structure. The RuvB hexamer acts as an ATP-dependent pump, pulling dsDNA into and through the RuvAB complex. HJ branch migration allows RuvC to scan DNA until it finds its consensus sequence, where it cleaves and resolves the cruciform DNA. The sequence is that of Holliday junction branch migration complex subunit RuvA from Flavobacterium psychrophilum (strain ATCC 49511 / DSM 21280 / CIP 103535 / JIP02/86).